The sequence spans 404 residues: Chorismate synthase (404 aa).

NADP(+)-binding residues include Arg43 and Arg49. Residues 138 to 140, 259 to 260, Gly303, 318 to 322, and Arg344 contribute to the FMN site; these read RAS, QA, and KPIST.

It belongs to the chorismate synthase family. In terms of assembly, homotetramer. FMNH2 serves as cofactor.

The catalysed reaction is 5-O-(1-carboxyvinyl)-3-phosphoshikimate = chorismate + phosphate. It functions in the pathway metabolic intermediate biosynthesis; chorismate biosynthesis; chorismate from D-erythrose 4-phosphate and phosphoenolpyruvate: step 7/7. Functionally, catalyzes the anti-1,4-elimination of the C-3 phosphate and the C-6 proR hydrogen from 5-enolpyruvylshikimate-3-phosphate (EPSP) to yield chorismate, which is the branch point compound that serves as the starting substrate for the three terminal pathways of aromatic amino acid biosynthesis. This reaction introduces a second double bond into the aromatic ring system. The polypeptide is Chorismate synthase (Mycolicibacterium paratuberculosis (strain ATCC BAA-968 / K-10) (Mycobacterium paratuberculosis)).